The primary structure comprises 601 residues: MEHGSSRGFIWLILFLDFVSRVTGKTQVDALIALRSSLSSGDHTNNILQSWNATHVTPCSWFHVTCNTENSVTRLDLGSANLSGELVPQLAQLPNLQYLELFNNNITGEIPEELGDLMELVSLDLFANNISGPIPSSLGKLGKLRFLRLYNNSLSGEIPRSLTALPLDVLDISNNRLSGDIPVNGSFSQFTSMSFANNKLRPRPASPSPSPSGTSAAIVVGVAAGAALLFALAWWLRRKLQGHFLDVPAEEDPEVYLGQFKRFSLRELLVATEKFSKRNVLGKGRFGILYKGRLADDTLVAVKRLNEERTKGGELQFQTEVEMISMAVHRNLLRLRGFCMTPTERLLVYPYMANGSVASCLRERPEGNPALDWPKRKHIALGSARGLAYLHDHCDQKIIHLDVKAANILLDEEFEAVVGDFGLAKLMNYNDSHVTTAVRGTIGHIAPEYLSTGKSSEKTDVFGYGVMLLELITGQKAFDLARLANDDDIMLLDWVKEVLKEKKLESLVDAELEGKYVETEVEQLIQMALLCTQSSAMERPKMSEVVRMLEGDGLAERWEEWQKEEMPIHDFNYQAYPHAGTDWLIPYSNSLIENDYPSGPR.

Residues 1-24 form the signal peptide; it reads MEHGSSRGFIWLILFLDFVSRVTG. Residues 25 to 215 lie on the Extracellular side of the membrane; it reads KTQVDALIAL…SPSPSPSGTS (191 aa). N-linked (GlcNAc...) asparagine glycosylation is found at N52, N81, N105, N129, N151, and N184. LRR repeat units follow at residues 71-94, 95-118, 119-141, 143-165, and 166-188; these read SVTR…AQLP, NLQY…GDLM, ELVS…LGKL, KLRF…LTAL, and PLDV…GSFS. Residues 216–236 traverse the membrane as a helical segment; that stretch reads AAIVVGVAAGAALLFALAWWL. The Cytoplasmic portion of the chain corresponds to 237–601; sequence RRKLQGHFLD…IENDYPSGPR (365 aa). T272 is modified (phosphothreonine). The Protein kinase domain occupies 275 to 572; that stretch reads FSKRNVLGKG…KEEMPIHDFN (298 aa). 281-289 is an ATP binding site; it reads LGKGRFGIL. T298 carries the phosphothreonine modification. ATP is bound at residue K303. Phosphoserine occurs at positions 356 and 359. D402 serves as the catalytic Proton acceptor. 3 positions are modified to phosphothreonine: T435, T436, and T441. Position 449 is a phosphotyrosine (Y449). S451 carries the phosphoserine modification. At T452 the chain carries Phosphothreonine. Phosphoserine is present on residues S456 and S506. Position 532 is a phosphothreonine (T532).

This sequence belongs to the protein kinase superfamily. Ser/Thr protein kinase family. Interacts with TMK4/BARK1. Autophosphorylated.

The protein localises to the cell membrane. It carries out the reaction L-seryl-[protein] + ATP = O-phospho-L-seryl-[protein] + ADP + H(+). It catalyses the reaction L-threonyl-[protein] + ATP = O-phospho-L-threonyl-[protein] + ADP + H(+). Functionally, serine/threonine-kinase of unknown function. This Arabidopsis thaliana (Mouse-ear cress) protein is Somatic embryogenesis receptor kinase 5 (SERK5).